A 286-amino-acid polypeptide reads, in one-letter code: Bifunctional protein FolD (286 aa).

Residues 165 to 167 and Ser-190 each bind NADP(+); that span reads GRS.

This sequence belongs to the tetrahydrofolate dehydrogenase/cyclohydrolase family. In terms of assembly, homodimer.

It carries out the reaction (6R)-5,10-methylene-5,6,7,8-tetrahydrofolate + NADP(+) = (6R)-5,10-methenyltetrahydrofolate + NADPH. The catalysed reaction is (6R)-5,10-methenyltetrahydrofolate + H2O = (6R)-10-formyltetrahydrofolate + H(+). The protein operates within one-carbon metabolism; tetrahydrofolate interconversion. Functionally, catalyzes the oxidation of 5,10-methylenetetrahydrofolate to 5,10-methenyltetrahydrofolate and then the hydrolysis of 5,10-methenyltetrahydrofolate to 10-formyltetrahydrofolate. The sequence is that of Bifunctional protein FolD from Burkholderia lata (strain ATCC 17760 / DSM 23089 / LMG 22485 / NCIMB 9086 / R18194 / 383).